Reading from the N-terminus, the 663-residue chain is DNA ligase (663 aa).

NAD(+) contacts are provided by residues 34-38 (DYEYD), 83-84 (SL), and E114. Residue K116 is the N6-AMP-lysine intermediate of the active site. NAD(+) contacts are provided by R137, E171, K286, and K310. Residues C404, C407, C422, and C427 each contribute to the Zn(2+) site. Residues 585–663 (TVESPLTGKN…ADEFIKLANG (79 aa)) enclose the BRCT domain.

The protein belongs to the NAD-dependent DNA ligase family. LigA subfamily. Mg(2+) is required as a cofactor. Requires Mn(2+) as cofactor.

The catalysed reaction is NAD(+) + (deoxyribonucleotide)n-3'-hydroxyl + 5'-phospho-(deoxyribonucleotide)m = (deoxyribonucleotide)n+m + AMP + beta-nicotinamide D-nucleotide.. Its function is as follows. DNA ligase that catalyzes the formation of phosphodiester linkages between 5'-phosphoryl and 3'-hydroxyl groups in double-stranded DNA using NAD as a coenzyme and as the energy source for the reaction. It is essential for DNA replication and repair of damaged DNA. The protein is DNA ligase of Brachyspira hyodysenteriae (strain ATCC 49526 / WA1).